Reading from the N-terminus, the 422-residue chain is m7GpppN-mRNA hydrolase (422 aa).

Residues 95–226 (MGVPTYGAII…KLGLAPNKFF (132 aa)) form the Nudix hydrolase domain. A Nudix box motif is present at residues 129–150 (GKVNKEEAPHDCAAREVFEETG). Residues E144 and E148 each contribute to the Mn(2+) site. Phosphoserine occurs at positions 246, 247, 249, 276, and 284. The disordered stretch occupies residues 247–347 (SDSDNGFSSA…GVHGQPAKQQ (101 aa)). The span at 249 to 258 (SDNGFSSAGS) shows a compositional bias: low complexity. Positions 303–312 (NHGEVSDLLK) are enriched in basic and acidic residues.

The protein belongs to the Nudix hydrolase family. DCP2 subfamily. In terms of assembly, found in a mRNA decay complex with LSM1, LSM3, LSM4, EXOSC2, EXOSC4, EXOSC10, PARN, XRN1, CNOT6, UPF1, UPF2 and UPF3B. Forms a complex with DCP1A, EDC3, DDX6 and EDC4/HEDLS, within this complex directly interacts with EDC4/HEDLS. Interacts with DPC1B, UPF1, UPF2 and UPF3B. Associates with polysomes. Interacts (via N-terminus and C-terminus) with TRIM21 (via N-terminus and C-terminus). Interacts with LIMD1, WTIP and AJUBA. Interacts with DDX17 in an RNA-dependent manner. Interacts with ZC3HAV1. Interacts with APOBEC3G in an RNA-dependent manner. Interacts with ZFP36L1 (via N-terminus). Interacts with NBDY. Mn(2+) is required as a cofactor. Requires Mg(2+) as cofactor. As to expression, strongly expressed in brain and testis. Weakly expressed in lung. Not detected in heart, liver, kidney and muscle (at protein level).

The protein resides in the cytoplasm. Its subcellular location is the P-body. The protein localises to the nucleus. The enzyme catalyses a 5'-end (N(7)-methyl 5'-triphosphoguanosine)-ribonucleoside in mRNA + H2O = N(7)-methyl-GDP + a 5'-end phospho-ribonucleoside in mRNA + 2 H(+). Functionally, decapping metalloenzyme that catalyzes the cleavage of the cap structure on mRNAs. Removes the 7-methyl guanine cap structure from mRNA molecules, yielding a 5'-phosphorylated mRNA fragment and 7m-GDP. Necessary for the degradation of mRNAs, both in normal mRNA turnover and in nonsense-mediated mRNA decay. Plays a role in replication-dependent histone mRNA degradation. Has higher activity towards mRNAs that lack a poly(A) tail. Has no activity towards a cap structure lacking an RNA moiety. The presence of a N(6)-methyladenosine methylation at the second transcribed position of mRNAs (N(6),2'-O-dimethyladenosine cap; m6A(m)) provides resistance to DCP2-mediated decapping. Blocks autophagy in nutrient-rich conditions by repressing the expression of ATG-related genes through degradation of their transcripts. The chain is m7GpppN-mRNA hydrolase (Dcp2) from Mus musculus (Mouse).